A 116-amino-acid polypeptide reads, in one-letter code: Phosphoribosyl-ATP pyrophosphatase (116 aa).

The protein belongs to the PRA-PH family.

Its subcellular location is the cytoplasm. The enzyme catalyses 1-(5-phospho-beta-D-ribosyl)-ATP + H2O = 1-(5-phospho-beta-D-ribosyl)-5'-AMP + diphosphate + H(+). It functions in the pathway amino-acid biosynthesis; L-histidine biosynthesis; L-histidine from 5-phospho-alpha-D-ribose 1-diphosphate: step 2/9. The sequence is that of Phosphoribosyl-ATP pyrophosphatase from Bordetella avium (strain 197N).